Reading from the N-terminus, the 142-residue chain is Large ribosomal subunit protein uL13 (142 aa).

It belongs to the universal ribosomal protein uL13 family. Part of the 50S ribosomal subunit.

Its function is as follows. This protein is one of the early assembly proteins of the 50S ribosomal subunit, although it is not seen to bind rRNA by itself. It is important during the early stages of 50S assembly. The polypeptide is Large ribosomal subunit protein uL13 (Tolumonas auensis (strain DSM 9187 / NBRC 110442 / TA 4)).